The sequence spans 322 residues: Undecaprenyl-phosphate 4-deoxy-4-formamido-L-arabinose transferase (322 aa).

Topologically, residues 1-235 (MFEIHPVKKV…TCLTTTPLRM (235 aa)) are cytoplasmic. Residues 236–256 (LSLLGSIIAIGGFSIAVLLVI) traverse the membrane as a helical segment. Topologically, residues 257 to 269 (LRLTFGPQWAAEG) are periplasmic. Residues 270-290 (VFMLFAVLFTFIGAQFIGMGL) form a helical membrane-spanning segment. The Cytoplasmic portion of the chain corresponds to 291 to 322 (LGEYIGRIYTDVRARPRYFVQQVIRPSSKENE).

It belongs to the glycosyltransferase 2 family.

It localises to the cell inner membrane. The catalysed reaction is UDP-4-deoxy-4-formamido-beta-L-arabinose + di-trans,octa-cis-undecaprenyl phosphate = 4-deoxy-4-formamido-alpha-L-arabinopyranosyl di-trans,octa-cis-undecaprenyl phosphate + UDP. It functions in the pathway glycolipid biosynthesis; 4-amino-4-deoxy-alpha-L-arabinose undecaprenyl phosphate biosynthesis; 4-amino-4-deoxy-alpha-L-arabinose undecaprenyl phosphate from UDP-4-deoxy-4-formamido-beta-L-arabinose and undecaprenyl phosphate: step 1/2. Its pathway is bacterial outer membrane biogenesis; lipopolysaccharide biosynthesis. Functionally, catalyzes the transfer of 4-deoxy-4-formamido-L-arabinose from UDP to undecaprenyl phosphate. The modified arabinose is attached to lipid A and is required for resistance to polymyxin and cationic antimicrobial peptides. This chain is Undecaprenyl-phosphate 4-deoxy-4-formamido-L-arabinose transferase, found in Shigella flexneri serotype 5b (strain 8401).